Here is a 91-residue protein sequence, read N- to C-terminus: Small ribosomal subunit protein uS19 (91 aa).

This sequence belongs to the universal ribosomal protein uS19 family.

Functionally, protein S19 forms a complex with S13 that binds strongly to the 16S ribosomal RNA. This chain is Small ribosomal subunit protein uS19, found in Laribacter hongkongensis (strain HLHK9).